The primary structure comprises 517 residues: Putative thymidine phosphorylase (517 aa).

This sequence belongs to the thymidine/pyrimidine-nucleoside phosphorylase family. Type 2 subfamily.

The catalysed reaction is thymidine + phosphate = 2-deoxy-alpha-D-ribose 1-phosphate + thymine. The protein is Putative thymidine phosphorylase of Legionella pneumophila subsp. pneumophila (strain Philadelphia 1 / ATCC 33152 / DSM 7513).